We begin with the raw amino-acid sequence, 1011 residues long: MSSAQTPLFLANQTKVFDHLIPLHKPFISSPNPVSQSFPMWRNIAKQAISRSAARLNVSSQTRGLLVSSPESIFSKNLSFRFPVLGSPCHGKGFRCLSGITRREEFSKSERCLSGTLARGYTSVAEEEVLSTDVEEEPEVDELLKEMKKEKKRESHRSWRMKKQDQFGMGRTKFQNLWRRQVKIETEEWERAAAEYMELLTDMCEQKLAPNLPYVKSLFLGWFEPLRDAIAKDQELYRLGKSKATYAHYLDQLPADKISVITMHKLMGHLMTGGDNGCVKVVHAACTVGDAIEQEIRICTFLDKKKKGDDNEESGGVENETSMKEQDKLRKKVNELIKKQKLSAVRKILQSHDYTKPWIADVRAKVGSRLIELLVRTAYIQSPADQQDNDLPDVRPAFVHTFKVAKGSMNSGRKYGVIECDPLVRKGLEKSGRYAVMPYMPMLVPPLKWSGYDKGAYLFLTSYIMKTHGAKQQREALKSAPKGQLQPVFEALDTLGSTKWRVNKRVLTVVDRIWSSGGCVADMVDRSDVPLPEKPDTEDEGILKKWKWEVKSAKKVNSERHSQRCDTELKLSVARKMKDEEAFYYPHNMDFRGRAYPMPPHLNHLGSDLCRGVLEFAEGRPMGISGLRWLKIHLANLYAGGVDKLSLDGRLAFTENHLDDIFDSADRPLEGSRWWLQAEDPFQCLAVCISLTEALRSPSPETVLSHIPIHQDGSCNGLQHYAALGRDTLGAEAVNLVAGEKPADVYSGIATRVLDIMRRDADRDPEVFPEALRARKLLNQVDRKLVKQTVMTSVYGVTYIGARDQIKRRLKERSDFGDEKEVFGAACYAAKVTLAAIDEMFQAARAIMRWFGECAKIIASENETVRWTTPLGLPVVQPYHQMGTKLVKTSLQTLSLQHETDQVIVRRQRTAFPPNFIHSLDGSHMMMTAVACKRAGVCFAGVHDSFWTHACDVDKLNIILREKFVELYSQPILENLLESFEQSFPHLDFPPLPERGDLDLKVVLDSPYFFN.

Positions 307 to 326 (KGDDNEESGGVENETSMKEQ) are disordered. Active-site residues include Asp-712, Lys-787, and Asp-944.

The protein belongs to the phage and mitochondrial RNA polymerase family. Interacts with NIP1 and NIP2.

The protein resides in the plastid. It localises to the chloroplast. It is found in the mitochondrion. The catalysed reaction is RNA(n) + a ribonucleoside 5'-triphosphate = RNA(n+1) + diphosphate. Its function is as follows. DNA-dependent RNA polymerase catalyzes the transcription of DNA into RNA using the four ribonucleoside triphosphates as substrates. The chain is DNA-directed RNA polymerase 2, chloroplastic/mitochondrial (RPOT2) from Arabidopsis thaliana (Mouse-ear cress).